We begin with the raw amino-acid sequence, 384 residues long: Eukaryotic translation initiation factor 3 subunit M (384 aa).

The region spanning 184–346 (ENRKAIEAMI…KKILITGAFP (163 aa)) is the PCI domain.

Belongs to the eIF-3 subunit M family. In terms of assembly, component of the eukaryotic translation initiation factor 3 (eIF-3) complex.

It localises to the cytoplasm. In terms of biological role, component of the eukaryotic translation initiation factor 3 (eIF-3) complex, which is involved in protein synthesis of a specialized repertoire of mRNAs and, together with other initiation factors, stimulates binding of mRNA and methionyl-tRNAi to the 40S ribosome. The eIF-3 complex specifically targets and initiates translation of a subset of mRNAs involved in cell proliferation. The sequence is that of Eukaryotic translation initiation factor 3 subunit M from Schistosoma japonicum (Blood fluke).